A 115-amino-acid chain; its full sequence is CRISPR-associated endoribonuclease Cas2 (115 aa).

D22 contacts Mg(2+).

It belongs to the CRISPR-associated endoribonuclease Cas2 protein family. Homodimer, forms a heterotetramer with a Cas1 homodimer. Mg(2+) serves as cofactor.

In terms of biological role, CRISPR (clustered regularly interspaced short palindromic repeat), is an adaptive immune system that provides protection against mobile genetic elements (viruses, transposable elements and conjugative plasmids). CRISPR clusters contain sequences complementary to antecedent mobile elements and target invading nucleic acids. CRISPR clusters are transcribed and processed into CRISPR RNA (crRNA). Functions as a ssRNA-specific endoribonuclease. Involved in the integration of spacer DNA into the CRISPR cassette. In Flavobacterium psychrophilum (strain ATCC 49511 / DSM 21280 / CIP 103535 / JIP02/86), this protein is CRISPR-associated endoribonuclease Cas2.